A 699-amino-acid polypeptide reads, in one-letter code: Kinesin-like protein KIF3A (699 aa).

In terms of domain architecture, Kinesin motor spans 14–345 (NVKVVVRCRP…LRYANRAKNI (332 aa)). 100-107 (GQTGTGKT) lines the ATP pocket. Positions 355 to 590 (PKDALLRQFQ…LSRELRLQML (236 aa)) form a coiled coil. Disordered stretches follow at residues 372–421 (KKLE…KMIE) and 663–699 (SLMK…SLLQ). Acidic residues predominate over residues 376–400 (EGEEISGSDISGSEEDDDEEGEVGE). Over residues 672-687 (TSKGKARPKTGRRKRS) the composition is skewed to basic residues. A Phosphoserine modification is found at serine 687. The interval 697–699 (LLQ) is globular.

It belongs to the TRAFAC class myosin-kinesin ATPase superfamily. Kinesin family. Kinesin II subfamily. As to quaternary structure, heterodimer of KIF3A and KIF3B. Interacts with CIMAP3. Interacts with CLN3. Interacts with DCTN1. Interacts with FLCN. Interacts with AP3B1.

The protein resides in the cytoplasm. It is found in the cytoskeleton. It localises to the cell projection. Its subcellular location is the cilium. The protein localises to the microtubule organizing center. The protein resides in the centrosome. It is found in the centriole. Functionally, microtubule-based anterograde translocator for membranous organelles. Plus end-directed microtubule sliding activity in vitro. Plays a role in primary cilia formation. Plays a role in centriole cohesion and subdistal appendage organization and function. Regulates the formation of the subdistal appendage via recruitment of DCTN1 to the centriole. Also required for ciliary basal feet formation and microtubule anchoring to mother centriole. The polypeptide is Kinesin-like protein KIF3A (KIF3A) (Homo sapiens (Human)).